A 348-amino-acid chain; its full sequence is Protein arginine N-methyltransferase 1 (348 aa).

Residues 20-322 (EQHYFNSYDH…EKNNRDLNIK (303 aa)) form the SAM-dependent MTase PRMT-type domain. The S-adenosyl-L-methionine site is built by His-33, Arg-42, Gly-66, Asp-88, and Glu-117. Residues Glu-132 and Glu-141 contribute to the active site.

Belongs to the class I-like SAM-binding methyltransferase superfamily. Protein arginine N-methyltransferase family. As to quaternary structure, homodimer. The dimers can then associate to form a ring-shaped homohexamer. Interacts with NPL3, BRE5, MTR4, SNF2, SUM1, and SSD1.

The protein localises to the nucleus. The catalysed reaction is L-arginyl-[protein] + S-adenosyl-L-methionine = N(omega)-methyl-L-arginyl-[protein] + S-adenosyl-L-homocysteine + H(+). The enzyme catalyses L-arginyl-[protein] + 2 S-adenosyl-L-methionine = N(omega),N(omega)-dimethyl-L-arginyl-[protein] + 2 S-adenosyl-L-homocysteine + 2 H(+). S-adenosyl-L-methionine-dependent protein-arginine N-methyltransferase that catalyzes both the mono- and asymmetric (type I) dimethylation of the guanidino nitrogens of arginine residues in a variety of RNA-binding proteins such as heterogeneous nuclear ribonucleoproteins (hnRNPs) and small nuclear ribonucleoproteins (snRNPs). Methylates NAB2, NPL3, HRP1 and YRA1, shuttling hnRNPs involved in mRNA processing and export, facilitating their export out of the nucleus. Methylation of NPL3 weakens its interaction with THO2, a component of the TREX (transcription/export) complex important for transcriptional elongation and recruitment of mRNA export factors. Methylates the hnRNP HRB1, but does not influence its subcellular location. Methylates the nucleolar proteins GAR1, NOP1 and NSR1. Methylates the snRNP SNP1 and modulates the cotranscriptional recruitment of splicing factors. Dimethylates free histone H4 (HHF1/HHF2) at 'Arg-4' (H4R3me2a) and plays a role in preservation and establishment of silent chromatin domains. Mono- and dimethylates ribosomal protein S2 (RPS2) at 'Arg-11'. Methylates the catalytic subunit of the SWI/SNF chromatin-remodeling complex SNF2. The protein is Protein arginine N-methyltransferase 1 of Saccharomyces cerevisiae (strain ATCC 204508 / S288c) (Baker's yeast).